Consider the following 336-residue polypeptide: Ketoreductase adrE (336 aa).

Tyrosine 171 lines the NADP(+) pocket.

This sequence belongs to the NAD(P)-dependent epimerase/dehydratase family. Dihydroflavonol-4-reductase subfamily.

Its pathway is secondary metabolite biosynthesis; terpenoid biosynthesis. Its function is as follows. Ketoreductase; part of the gene cluster that mediates the biosynthesis of andrastins, meroterpenoid compounds that exhibit inhibitory activity against ras farnesyltransferase, suggesting that they could be promising leads for antitumor agents. The first step of the pathway is the synthesis of 3,5-dimethylorsellinic acid (DMOA) by the polyketide synthase adrD via condensation of one acetyl-CoA starter unit with 3 malonyl-CoA units and 2 methylations. DMAO is then converted to farnesyl-DMAO by the prenyltransferase adrG. The methyltransferase adrK catalyzes the methylation of the carboxyl group of farnesyl-DMAO to farnesyl-DMAO methyl ester which is further converted to epoxyfarnesyl-DMAO methyl ester by the FAD-dependent monooxygenase adrH. The terpene cyclase adrI then catalyzes the carbon skeletal rearrangement to generate the andrastin E, the first compound in the pathway having the andrastin scaffold, with the tetracyclic ring system. The post-cyclization tailoring enzymes adrF, adrE, adrJ, and adrA, are involved in the conversion of andrastin E into andrastin A. The short chain dehydrogenase adrF is responsible for the oxidation of the C-3 a hydroxyl group of andrastin E to yield the corresponding ketone, andrastin D. The ketoreductase adrE stereoselectively reduces the carbonyl moiety to reverse the stereochemistry of the C-3 position to yield andrastin F. The acetyltransferase adrJ is the acetyltransferase that attaches the acetyl group to the C-3 hydroxyl group of andrastin F to yield andrastin C. Finally, the cytochrome P450 monooxygenase adrA catalyzes two sequential oxidation reactions of the C-23 methyl group, to generate the corresponding alcohol andrastin B, and aldehyde andrastin A. The protein is Ketoreductase adrE of Penicillium roqueforti.